The following is a 505-amino-acid chain: Lysine--tRNA ligase (505 aa).

Mg(2+) contacts are provided by E415 and E422.

Belongs to the class-II aminoacyl-tRNA synthetase family. As to quaternary structure, homodimer. Mg(2+) serves as cofactor.

It localises to the cytoplasm. It catalyses the reaction tRNA(Lys) + L-lysine + ATP = L-lysyl-tRNA(Lys) + AMP + diphosphate. In Salmonella arizonae (strain ATCC BAA-731 / CDC346-86 / RSK2980), this protein is Lysine--tRNA ligase.